The sequence spans 227 residues: Cytidylate kinase (227 aa).

12-20 (GPSGAGKGT) contributes to the ATP binding site.

This sequence belongs to the cytidylate kinase family. Type 1 subfamily.

It localises to the cytoplasm. The catalysed reaction is CMP + ATP = CDP + ADP. It carries out the reaction dCMP + ATP = dCDP + ADP. The polypeptide is Cytidylate kinase (Escherichia fergusonii (strain ATCC 35469 / DSM 13698 / CCUG 18766 / IAM 14443 / JCM 21226 / LMG 7866 / NBRC 102419 / NCTC 12128 / CDC 0568-73)).